A 425-amino-acid chain; its full sequence is Serine--tRNA ligase (425 aa).

Disordered stretches follow at residues 43-69 (QRSSLQAEGNRIGKEVGQRIQQGSDPK) and 108-134 (LPNLPSPDCPEGRDENDNQERHRWGKP). Residues 117 to 134 (PEGRDENDNQERHRWGKP) are compositionally biased toward basic and acidic residues. Residue 233–235 (TAE) coordinates L-serine. An ATP-binding site is contributed by 264–266 (RRE). Glu287 serves as a coordination point for L-serine. An ATP-binding site is contributed by 351-354 (EISS). Ser385 is an L-serine binding site.

Belongs to the class-II aminoacyl-tRNA synthetase family. Type-1 seryl-tRNA synthetase subfamily. Homodimer. The tRNA molecule binds across the dimer.

Its subcellular location is the cytoplasm. It carries out the reaction tRNA(Ser) + L-serine + ATP = L-seryl-tRNA(Ser) + AMP + diphosphate + H(+). The enzyme catalyses tRNA(Sec) + L-serine + ATP = L-seryl-tRNA(Sec) + AMP + diphosphate + H(+). It participates in aminoacyl-tRNA biosynthesis; selenocysteinyl-tRNA(Sec) biosynthesis; L-seryl-tRNA(Sec) from L-serine and tRNA(Sec): step 1/1. Catalyzes the attachment of serine to tRNA(Ser). Is also able to aminoacylate tRNA(Sec) with serine, to form the misacylated tRNA L-seryl-tRNA(Sec), which will be further converted into selenocysteinyl-tRNA(Sec). The polypeptide is Serine--tRNA ligase (Prochlorococcus marinus (strain MIT 9313)).